The following is a 336-amino-acid chain: uncharacterized protein (336 aa).

Gly-29–Ser-36 contributes to the ATP binding site.

The protein belongs to the archaeal ATPase family.

This is an uncharacterized protein from Methanocaldococcus jannaschii (strain ATCC 43067 / DSM 2661 / JAL-1 / JCM 10045 / NBRC 100440) (Methanococcus jannaschii).